We begin with the raw amino-acid sequence, 135 residues long: D-ribose pyranase (135 aa).

Residue His20 is the Proton donor of the active site. Residues Asp28, His102, and 124–126 (YSN) each bind substrate.

This sequence belongs to the RbsD / FucU family. RbsD subfamily. Homodecamer.

Its subcellular location is the cytoplasm. The enzyme catalyses beta-D-ribopyranose = beta-D-ribofuranose. It functions in the pathway carbohydrate metabolism; D-ribose degradation; D-ribose 5-phosphate from beta-D-ribopyranose: step 1/2. Its function is as follows. Catalyzes the interconversion of beta-pyran and beta-furan forms of D-ribose. The sequence is that of D-ribose pyranase from Thermotoga maritima (strain ATCC 43589 / DSM 3109 / JCM 10099 / NBRC 100826 / MSB8).